A 121-amino-acid chain; its full sequence is Protein GAT4 (121 aa).

Positions 29–48 (EAQHGLPRNADSQPARPRTG) are disordered. Residues 53-79 (CGQCGEIKTSLQWREGPNGAACLCNAC) form a GATA-type zinc finger.

In Saccharomyces cerevisiae (strain ATCC 204508 / S288c) (Baker's yeast), this protein is Protein GAT4 (GAT4).